The chain runs to 503 residues: 4-trimethylaminobutyraldehyde dehydrogenase (503 aa).

NAD(+)-binding positions include Lys-189 and 241-245; that span reads GSVPT. Residue Glu-263 is the Proton acceptor of the active site. Cys-297 (nucleophile) is an active-site residue. Residue Glu-400 coordinates NAD(+).

The protein belongs to the aldehyde dehydrogenase family. As to quaternary structure, homotetramer.

It localises to the cytoplasm. The protein resides in the cytosol. It carries out the reaction 4-(trimethylamino)butanal + NAD(+) + H2O = 4-(trimethylamino)butanoate + NADH + 2 H(+). It catalyses the reaction an aldehyde + NAD(+) + H2O = a carboxylate + NADH + 2 H(+). It functions in the pathway amine and polyamine biosynthesis; carnitine biosynthesis. Converts gamma-trimethylaminobutyraldehyde into gamma-butyrobetaine with high efficiency (in vitro). Can catalyze the irreversible oxidation of a broad range of aldehydes to the corresponding acids in an NAD-dependent reaction, but with low efficiency. This chain is 4-trimethylaminobutyraldehyde dehydrogenase (aldh9A1), found in Gadus morhua subsp. callarias (Baltic cod).